The primary structure comprises 311 residues: HPr kinase/phosphorylase (311 aa).

Residues histidine 138 and lysine 159 contribute to the active site. 153–160 (GDSGIGKS) is a binding site for ATP. Mg(2+) is bound at residue serine 160. Catalysis depends on aspartate 177, which acts as the Proton acceptor; for phosphorylation activity. Proton donor; for dephosphorylation activity. An important for the catalytic mechanism of both phosphorylation and dephosphorylation region spans residues 201–210 (LEIRGVGIID). Mg(2+) is bound at residue glutamate 202. Residue arginine 243 is part of the active site. The tract at residues 264 to 269 (PVKTGR) is important for the catalytic mechanism of dephosphorylation.

Belongs to the HPrK/P family. As to quaternary structure, homohexamer. Mg(2+) serves as cofactor.

The enzyme catalyses [HPr protein]-L-serine + ATP = [HPr protein]-O-phospho-L-serine + ADP + H(+). It carries out the reaction [HPr protein]-O-phospho-L-serine + phosphate + H(+) = [HPr protein]-L-serine + diphosphate. Its function is as follows. Catalyzes the ATP- as well as the pyrophosphate-dependent phosphorylation of a specific serine residue in HPr, a phosphocarrier protein of the phosphoenolpyruvate-dependent sugar phosphotransferase system (PTS). HprK/P also catalyzes the pyrophosphate-producing, inorganic phosphate-dependent dephosphorylation (phosphorolysis) of seryl-phosphorylated HPr (P-Ser-HPr). The two antagonistic activities of HprK/P are regulated by several intracellular metabolites, which change their concentration in response to the absence or presence of rapidly metabolisable carbon sources (glucose, fructose, etc.) in the growth medium. Therefore, by controlling the phosphorylation state of HPr, HPrK/P is a sensor enzyme that plays a major role in the regulation of carbon metabolism and sugar transport: it mediates carbon catabolite repression (CCR), and regulates PTS-catalyzed carbohydrate uptake and inducer exclusion. This is HPr kinase/phosphorylase from Streptococcus sanguinis (strain SK36).